A 969-amino-acid polypeptide reads, in one-letter code: Protein translocase subunit SecA (969 aa).

ATP is bound by residues glutamine 99, 117 to 121, and aspartate 631; that span reads GEGKT.

Belongs to the SecA family. In terms of assembly, monomer and homodimer. Part of the essential Sec protein translocation apparatus which comprises SecA, SecYEG and auxiliary proteins SecDF. Other proteins may also be involved.

The protein resides in the cell inner membrane. Its subcellular location is the cytoplasm. The enzyme catalyses ATP + H2O + cellular proteinSide 1 = ADP + phosphate + cellular proteinSide 2.. Functionally, part of the Sec protein translocase complex. Interacts with the SecYEG preprotein conducting channel. Has a central role in coupling the hydrolysis of ATP to the transfer of proteins into and across the cell membrane, serving as an ATP-driven molecular motor driving the stepwise translocation of polypeptide chains across the membrane. The protein is Protein translocase subunit SecA of Chlamydia trachomatis serovar D (strain ATCC VR-885 / DSM 19411 / UW-3/Cx).